The following is a 288-amino-acid chain: Putative sugar uptake protein gbs2116 (288 aa).

10 helical membrane-spanning segments follow: residues 4-26 (LLIA…KIGG), 33-50 (FGMT…WLFK), 55-72 (TASL…WSVG), 85-107 (VSVA…GALV), 117-134 (FILG…FYFS), 154-171 (FATI…AVLF), 181-200 (AVIL…FMKF), 207-229 (VVVK…LLAA), 234-256 (LAIA…ILFL), and 268-285 (VVMG…LGIV).

The protein belongs to the GRP transporter (TC 2.A.7.5) family.

The protein resides in the cell membrane. The polypeptide is Putative sugar uptake protein gbs2116 (Streptococcus agalactiae serotype III (strain NEM316)).